The following is a 182-amino-acid chain: Vomeronasal secretory protein 1 (182 aa).

The N-terminal stretch at 1 to 18 (MRALLLIISFCLVAVLQA) is a signal peptide. Residue Asn30 is glycosylated (N-linked (GlcNAc...) asparagine). Cys76 and Cys168 are oxidised to a cystine.

The protein belongs to the calycin superfamily. Lipocalin family. As to expression, specifically expressed in vomeronasal and posterior glands of the nasal septum, the ducts of which open into the lumen of the vomeronasal organ.

The protein localises to the secreted. Functionally, transport of lipophilic molecules, possible pheromone-carrier. The chain is Vomeronasal secretory protein 1 (Lcn3) from Mus musculus (Mouse).